Reading from the N-terminus, the 303-residue chain is US1 protein (303 aa).

Residues 230–284 (IPAPGRPLPRRRPSEGGMRAPRRRSRAPAPARSTAAAATPPRPGDPRAPAARRAG) form a disordered region. Over residues 256–268 (APAPARSTAAAAT) the composition is skewed to low complexity.

This sequence belongs to the herpesviridae US2 family.

The protein is US1 protein (US1) of Equine herpesvirus 1 (strain Kentucky A) (EHV-1).